A 118-amino-acid polypeptide reads, in one-letter code: Basic phospholipase A2 PA-10A (118 aa).

7 cysteine pairs are disulfide-bonded: C11-C71, C27-C117, C29-C45, C44-C98, C51-C91, C60-C84, and C78-C89. The Ca(2+) site is built by Y28, G30, and G32. H48 is a catalytic residue. D49 lines the Ca(2+) pocket. The active site involves D92.

It belongs to the phospholipase A2 family. Group I subfamily. D49 sub-subfamily. Requires Ca(2+) as cofactor. In terms of tissue distribution, expressed by the venom gland.

It localises to the secreted. It catalyses the reaction a 1,2-diacyl-sn-glycero-3-phosphocholine + H2O = a 1-acyl-sn-glycero-3-phosphocholine + a fatty acid + H(+). In terms of biological role, PLA2 catalyzes the calcium-dependent hydrolysis of the 2-acyl groups in 3-sn-phosphoglycerides. This chain is Basic phospholipase A2 PA-10A, found in Pseudechis australis (Mulga snake).